The following is a 235-amino-acid chain: Large ribosomal subunit protein uL1 (235 aa).

It belongs to the universal ribosomal protein uL1 family. Part of the 50S ribosomal subunit.

Binds directly to 23S rRNA. The L1 stalk is quite mobile in the ribosome, and is involved in E site tRNA release. Functionally, protein L1 is also a translational repressor protein, it controls the translation of the L11 operon by binding to its mRNA. This is Large ribosomal subunit protein uL1 from Synechococcus sp. (strain CC9902).